Consider the following 320-residue polypeptide: Eukaryotic translation initiation factor 3 subunit G (320 aa).

Residues 1-25 (MPTGDFDSKPSWADQVEEEGEDDKC) form a disordered region. A phosphoserine mark is found at Ser8 and Ser11. Residues Thr38 and Thr41 each carry the phosphothreonine modification. Ser42, Ser189, Ser223, and Ser264 each carry phosphoserine. The tract at residues 209-234 (KTGKYVPPSLRDGASRRGESMQPNRR) is disordered. The segment covering 221 to 234 (GASRRGESMQPNRR) has biased composition (basic and acidic residues). The RRM domain maps to 239-317 (ATIRVTNLSE…LILNVEWAKP (79 aa)).

This sequence belongs to the eIF-3 subunit G family. As to quaternary structure, component of the eukaryotic translation initiation factor 3 (eIF-3) complex, which is composed of 13 subunits: EIF3A, EIF3B, EIF3C, EIF3D, EIF3E, EIF3F, EIF3G, EIF3H, EIF3I, EIF3J, EIF3K, EIF3L and EIF3M. The eIF-3 complex appears to include 3 stable modules: module A is composed of EIF3A, EIF3B, EIF3G and EIF3I; module B is composed of EIF3F, EIF3H, and EIF3M; and module C is composed of EIF3C, EIF3D, EIF3E, EIF3K and EIF3L. EIF3C of module C binds EIF3B of module A and EIF3H of module B, thereby linking the three modules. EIF3J is a labile subunit that binds to the eIF-3 complex via EIF3B. The eIF-3 complex interacts with RPS6KB1 under conditions of nutrient depletion. Mitogenic stimulation leads to binding and activation of a complex composed of FRAP1 and RAPTOR, leading to phosphorylation and release of RPS6KB1 and binding of EIF4B to eIF-3. Interacts (via C-terminus) with AIFM1 (via N-terminus). Interacts with DHX33; the interaction is independent of RNA. Phosphorylated. Phosphorylation is enhanced upon serum stimulation.

The protein resides in the cytoplasm. The protein localises to the nucleus. It is found in the perinuclear region. RNA-binding component of the eukaryotic translation initiation factor 3 (eIF-3) complex, which is required for several steps in the initiation of protein synthesis. The eIF-3 complex associates with the 40S ribosome and facilitates the recruitment of eIF-1, eIF-1A, eIF-2:GTP:methionyl-tRNAi and eIF-5 to form the 43S pre-initiation complex (43S PIC). The eIF-3 complex stimulates mRNA recruitment to the 43S PIC and scanning of the mRNA for AUG recognition. The eIF-3 complex is also required for disassembly and recycling of post-termination ribosomal complexes and subsequently prevents premature joining of the 40S and 60S ribosomal subunits prior to initiation. The eIF-3 complex specifically targets and initiates translation of a subset of mRNAs involved in cell proliferation, including cell cycling, differentiation and apoptosis, and uses different modes of RNA stem-loop binding to exert either translational activation or repression. This subunit can bind 18S rRNA. The protein is Eukaryotic translation initiation factor 3 subunit G of Bos taurus (Bovine).